We begin with the raw amino-acid sequence, 253 residues long: Hydroxypyruvate/pyruvate aldolase (253 aa).

Catalysis depends on His-48, which acts as the Proton acceptor. A divalent metal cation-binding residues include Glu-151 and Asp-177.

This sequence belongs to the HpcH/HpaI aldolase family. The cofactor is a divalent metal cation.

It catalyses the reaction D-glyceraldehyde + pyruvate = 2-dehydro-3-deoxy-L-galactonate. Its function is as follows. Aldolase which can catalyze in vitro the aldolisation reaction between hydroxypyruvate (HPA) or pyruvate (PA) and D-glyceraldehyde (D-GA). The condensation of pyruvate and D-glyceraldehyde produces 2-dehydro-3-deoxy-L-galactonate. Has weak activity with hydroxypyruvate and D-glyceraldehyde. In Sagittula stellata (strain ATCC 700073 / DSM 11524 / E-37), this protein is Hydroxypyruvate/pyruvate aldolase.